The following is a 224-amino-acid chain: Germin-like protein 8-10 (224 aa).

Residues 1–22 (MASPSICLLAALLALVSWQAIA) form the signal peptide. The cysteines at positions 32 and 47 are disulfide-linked. Residues 62 to 212 (AMLDTPRKTN…AFQVEKGTID (151 aa)) form the Cupin type-1 domain. N76 carries N-linked (GlcNAc...) asparagine glycosylation. Mn(2+)-binding residues include H109, H111, and E116. N-linked (GlcNAc...) asparagine glycosylation is present at N135. A Mn(2+)-binding site is contributed by H157.

Belongs to the germin family. In terms of assembly, oligomer (believed to be a pentamer but probably hexamer).

It localises to the secreted. It is found in the extracellular space. The protein resides in the apoplast. In terms of biological role, plays a role in broad-spectrum disease resistance. Probably has no oxalate oxidase activity even if the active site is conserved. This is Germin-like protein 8-10 (GLP2) from Oryza sativa subsp. japonica (Rice).